We begin with the raw amino-acid sequence, 213 residues long: Nickel-cobalt-cadmium resistance protein NccN (213 aa).

Helical transmembrane passes span 24 to 44 (IGIW…GHSQ), 48 to 68 (TWIS…ATVG), 113 to 133 (ESIT…PAVI), and 180 to 200 (NLAD…VELA).

To A.eutrophus CzcN.

The protein localises to the cell inner membrane. Functionally, component of the NCC cation-efflux system that confers resistance to nickel, cobalt and cadmium. Appears to be involved in metal specificity but affects only nickel resistance. May be involved in nickel transport. In Alcaligenes xylosoxydans xylosoxydans (Achromobacter xylosoxidans), this protein is Nickel-cobalt-cadmium resistance protein NccN (nccN).